Consider the following 265-residue polypeptide: 2-amino-3,7-dideoxy-D-threo-hept-6-ulosonate synthase (265 aa).

The active-site Proton acceptor is Asp-25. 1-deoxy-D-threo-hexo-2,5-diulose 6-phosphate contacts are provided by residues 25-29 (DHGIT) and 144-146 (YAR). Tyr-144 functions as the Proton donor in the catalytic mechanism. Lys-174 serves as the catalytic Schiff-base intermediate with substrate. 1-deoxy-D-threo-hexo-2,5-diulose 6-phosphate-binding positions include 199-200 (GG) and 226-227 (GR).

The protein belongs to the DeoC/FbaB aldolase family. ADHS subfamily. In terms of assembly, homodecamer.

The catalysed reaction is 1-deoxy-D-threo-hexo-2,5-diulose 6-phosphate + L-aspartate 4-semialdehyde = 2,3-dioxopropyl phosphate + 2-amino-2,3,7-trideoxy-D-lyxo-hept-6-ulosonate. In terms of biological role, catalyzes a transaldol reaction between 6-deoxy-5-ketofructose 1-phosphate (DKFP) and L-aspartate semialdehyde (ASA) with an elimination of hydroxypyruvaldehyde phosphate to yield 2-amino-3,7-dideoxy-D-threo-hept-6-ulosonate (ADH). Plays a key role in an alternative pathway of the biosynthesis of 3-dehydroquinate (DHQ), which is involved in the canonical pathway for the biosynthesis of aromatic amino acids. The protein is 2-amino-3,7-dideoxy-D-threo-hept-6-ulosonate synthase of Halobacterium salinarum (strain ATCC 700922 / JCM 11081 / NRC-1) (Halobacterium halobium).